A 561-amino-acid polypeptide reads, in one-letter code: DNA ligase B (561 aa).

The active-site N6-AMP-lysine intermediate is the lysine 128.

It belongs to the NAD-dependent DNA ligase family. LigB subfamily.

The enzyme catalyses NAD(+) + (deoxyribonucleotide)n-3'-hydroxyl + 5'-phospho-(deoxyribonucleotide)m = (deoxyribonucleotide)n+m + AMP + beta-nicotinamide D-nucleotide.. Its function is as follows. Catalyzes the formation of phosphodiester linkages between 5'-phosphoryl and 3'-hydroxyl groups in double-stranded DNA using NAD as a coenzyme and as the energy source for the reaction. The polypeptide is DNA ligase B (Pseudomonas syringae pv. syringae (strain B728a)).